We begin with the raw amino-acid sequence, 355 residues long: Type II restriction enzyme CfrBI (355 aa).

It carries out the reaction Endonucleolytic cleavage of DNA to give specific double-stranded fragments with terminal 5'-phosphates.. Functionally, a P subtype restriction enzyme that recognizes the double-stranded sequence 5'-CCWWGG-3' and cleaves after C-1. The chain is Type II restriction enzyme CfrBI from Citrobacter freundii.